The chain runs to 269 residues: Ubiquinone/menaquinone biosynthesis C-methyltransferase UbiE (269 aa).

S-adenosyl-L-methionine contacts are provided by residues Thr92, Asp113, and 141 to 142 (NA).

This sequence belongs to the class I-like SAM-binding methyltransferase superfamily. MenG/UbiE family.

It carries out the reaction a 2-demethylmenaquinol + S-adenosyl-L-methionine = a menaquinol + S-adenosyl-L-homocysteine + H(+). It catalyses the reaction a 2-methoxy-6-(all-trans-polyprenyl)benzene-1,4-diol + S-adenosyl-L-methionine = a 5-methoxy-2-methyl-3-(all-trans-polyprenyl)benzene-1,4-diol + S-adenosyl-L-homocysteine + H(+). Its pathway is quinol/quinone metabolism; menaquinone biosynthesis; menaquinol from 1,4-dihydroxy-2-naphthoate: step 2/2. It participates in cofactor biosynthesis; ubiquinone biosynthesis. Methyltransferase required for the conversion of demethylmenaquinol (DMKH2) to menaquinol (MKH2) and the conversion of 2-polyprenyl-6-methoxy-1,4-benzoquinol (DDMQH2) to 2-polyprenyl-3-methyl-6-methoxy-1,4-benzoquinol (DMQH2). This is Ubiquinone/menaquinone biosynthesis C-methyltransferase UbiE from Brucella melitensis biotype 2 (strain ATCC 23457).